We begin with the raw amino-acid sequence, 1168 residues long: Carbamoyl phosphate synthase arginine-specific large chain, mitochondrial (1168 aa).

A mitochondrion-targeting transit peptide spans 1-51 (MLSTVHKAGRAPALLRHGRRVPVQASQLRALTSGAQNTSIFQTQANAAQRL). Residues 86 to 483 (RDHVDVKKVL…SFQKAIRQVD (398 aa)) form a carboxyphosphate synthetic domain region. ATP-binding positions include Arg-213, 243–298 (ANKI…WKEV), Arg-253, Gly-259, Gly-260, Lys-290, Leu-292, Glu-297, Gly-323, Ile-324, His-325, Gln-366, and Glu-380. An ATP-grasp 1 domain is found at 217-409 (AKALEEINIP…LAYTAAKIGL (193 aa)). Gln-366, Glu-380, and Asn-382 together coordinate Mg(2+). Positions 366, 380, and 382 each coordinate Mn(2+). The segment at 484–628 (PRFVGFQGDK…YTTYNASSHD (145 aa)) is oligomerization domain. The tract at residues 629–1017 (VTFEDKGTVI…AYWASLQSAM (389 aa)) is carbamoyl phosphate synthetic domain. The ATP-grasp 2 domain occupies 754 to 951 (SEILDSIGVD…FIDAATKALV (198 aa)). ATP-binding positions include 780 to 837 (AEEV…AQEI), Arg-790, Lys-829, Ile-831, Glu-836, Gly-861, Val-862, His-863, Ser-864, Gln-904, and Glu-922. Positions 904, 922, and 924 each coordinate Mg(2+). Positions 904, 922, and 924 each coordinate Mn(2+). Residues 1018 to 1152 (NFRVPEPGEG…AEKLPRPEGI (135 aa)) are allosteric domain. The region spanning 1019–1168 (FRVPEPGEGL…WSEFIGGKPL (150 aa)) is the MGS-like domain.

The protein belongs to the CarB family. Heterodimer composed of 2 chains; the small (or glutamine) chain promotes the hydrolysis of glutamine to ammonia, which is used by the large (or ammonia) chain to synthesize carbamoyl phosphate. Requires Mg(2+) as cofactor. Mn(2+) is required as a cofactor.

The protein localises to the mitochondrion matrix. It carries out the reaction hydrogencarbonate + L-glutamine + 2 ATP + H2O = carbamoyl phosphate + L-glutamate + 2 ADP + phosphate + 2 H(+). It catalyses the reaction hydrogencarbonate + NH4(+) + 2 ATP = carbamoyl phosphate + 2 ADP + phosphate + 2 H(+). The protein operates within amino-acid biosynthesis; L-arginine biosynthesis; carbamoyl phosphate from bicarbonate: step 1/1. Its function is as follows. Large subunit of the arginine-specific carbamoyl phosphate synthase (CPSase). CPSase catalyzes the formation of carbamoyl phosphate from the ammonia moiety of glutamine, hydrogencarbonate, and phosphate donated by ATP, the first step of the arginine biosynthetic pathway. The large subunit (synthetase) binds the substrates ammonia (free or transferred from glutamine from the small subunit), hydrogencarbonate and ATP and carries out an ATP-coupled ligase reaction, activating hydrogencarbonate by forming carboxy phosphate which reacts with ammonia to form carbamoyl phosphate. The protein is Carbamoyl phosphate synthase arginine-specific large chain, mitochondrial (arg-3) of Neurospora crassa (strain ATCC 24698 / 74-OR23-1A / CBS 708.71 / DSM 1257 / FGSC 987).